The chain runs to 194 residues: Thymidine kinase (194 aa).

Residues 15-22 (GSMFSGKS) and 88-91 (DEVQ) each bind ATP. The active-site Proton acceptor is the glutamate 89. Zn(2+)-binding residues include cysteine 145, cysteine 148, cysteine 183, and cysteine 186.

Belongs to the thymidine kinase family. In terms of assembly, homotetramer.

It is found in the cytoplasm. The catalysed reaction is thymidine + ATP = dTMP + ADP + H(+). The chain is Thymidine kinase from Bacillus anthracis (strain A0248).